The chain runs to 73 residues: MRTTLDLDDDVIAAARELASSQRRSLGSVISELARRGLMPGRVEADDGLPVIRVPAGTPPITPEMVRRALDED.

Its function is as follows. Probable antitoxin component of a type II toxin-antitoxin (TA) system. Its putative cognate toxin is VapC38. This chain is Putative antitoxin VapB38 (vapB38), found in Mycobacterium tuberculosis (strain ATCC 25618 / H37Rv).